We begin with the raw amino-acid sequence, 406 residues long: Probable delta-aminolevulinic acid dehydratase 2, chloroplastic (406 aa).

The N-terminal 34 residues, 1 to 34 (MTSSMFRSPCKIPSVKGFEQKSYVGLKAASYNVR), are a transit peptide targeting the chloroplast. Lys-275 (schiff-base intermediate with substrate) is an active-site residue. Arg-285 and Lys-291 together coordinate 5-aminolevulinate. Residue Glu-307 coordinates Mg(2+). Lys-322 acts as the Schiff-base intermediate with substrate in catalysis. 2 residues coordinate 5-aminolevulinate: Ser-348 and Tyr-387.

This sequence belongs to the ALAD family. As to quaternary structure, homooctamer. Mg(2+) serves as cofactor.

The protein resides in the plastid. It localises to the chloroplast. The enzyme catalyses 2 5-aminolevulinate = porphobilinogen + 2 H2O + H(+). It functions in the pathway porphyrin-containing compound metabolism; protoporphyrin-IX biosynthesis; coproporphyrinogen-III from 5-aminolevulinate: step 1/4. Its pathway is porphyrin-containing compound metabolism; chlorophyll biosynthesis. Catalyzes an early step in the biosynthesis of tetrapyrroles. Binds two molecules of 5-aminolevulinate per subunit, each at a distinct site, and catalyzes their condensation to form porphobilinogen. In Arabidopsis thaliana (Mouse-ear cress), this protein is Probable delta-aminolevulinic acid dehydratase 2, chloroplastic (HEMB2).